We begin with the raw amino-acid sequence, 560 residues long: Nucleoprotein (560 aa).

The interval 53-236 (MRKDKRTDTD…ITQEQSQINV (184 aa)) is binding site for the cap structure m7GTP. Residues 333–353 (LTDTGSPNHPPVRNGGSPRLS) form a disordered region. Positions 379 and 381 each coordinate Mn(2+). Positions 389, 496, 499, and 520 each coordinate Zn(2+). Position 524 (Asp-524) interacts with Mn(2+).

This sequence belongs to the arenaviridae nucleocapsid protein family. Homomultimerizes to form the nucleocapsid. Binds to viral genomic RNA. Interacts with glycoprotein G2. Interacts with protein Z; this interaction probably directs the encapsidated genome to budding sites. Interacts with protein L; this interaction does not interfere with Z-L interaction. Interacts with host IKBKE (via Protein kinase domain); the interaction inhibits IKBKE kinase activity.

It localises to the virion. It is found in the host cytoplasm. Its function is as follows. Encapsidates the genome, protecting it from nucleases. The encapsidated genomic RNA is termed the nucleocapsid (NC). Serves as template for viral transcription and replication. The increased presence of protein N in host cell does not seem to trigger the switch from transcription to replication as observed in other negative strain RNA viruses. Through the interaction with host IKBKE, strongly inhibits the phosphorylation and nuclear translocation of host IRF3, a protein involved in interferon activation pathway, leading to the inhibition of interferon-beta and IRF3-dependent promoters activation. Also encodes a functional 3'-5' exoribonuclease that degrades preferentially dsRNA substrates and thereby participates in the suppression of interferon induction. The chain is Nucleoprotein from Pirital mammarenavirus (isolate Rat/Venezuela/VAV-488/1995) (PIRV).